Consider the following 59-residue polypeptide: Large ribosomal subunit protein bL32 (59 aa).

The interval methionine 1–glycine 34 is disordered. The span at lysine 7 to arginine 16 shows a compositional bias: basic residues.

This sequence belongs to the bacterial ribosomal protein bL32 family.

The protein is Large ribosomal subunit protein bL32 of Marinomonas sp. (strain MWYL1).